The sequence spans 1180 residues: Pesticidal crystal protein Cry4Aa (1180 aa).

It belongs to the delta endotoxin family.

In terms of biological role, promotes colloidosmotic lysis by binding to the midgut epithelial cells of insects. The sequence is that of Pesticidal crystal protein Cry4Aa (cry4Aa) from Bacillus thuringiensis subsp. israelensis.